Here is a 425-residue protein sequence, read N- to C-terminus: Glutamate-1-semialdehyde 2,1-aminomutase (425 aa).

Lys265 carries the N6-(pyridoxal phosphate)lysine modification.

It belongs to the class-III pyridoxal-phosphate-dependent aminotransferase family. HemL subfamily. As to quaternary structure, homodimer. Requires pyridoxal 5'-phosphate as cofactor.

It localises to the cytoplasm. The enzyme catalyses (S)-4-amino-5-oxopentanoate = 5-aminolevulinate. It participates in porphyrin-containing compound metabolism; protoporphyrin-IX biosynthesis; 5-aminolevulinate from L-glutamyl-tRNA(Glu): step 2/2. The protein is Glutamate-1-semialdehyde 2,1-aminomutase of Clostridium perfringens (strain ATCC 13124 / DSM 756 / JCM 1290 / NCIMB 6125 / NCTC 8237 / Type A).